Here is a 372-residue protein sequence, read N- to C-terminus: Glutamate 5-kinase (372 aa).

An ATP-binding site is contributed by K14. 3 residues coordinate substrate: S54, D141, and N153. 173-174 (TD) is an ATP binding site. A PUA domain is found at 280–358 (RGHVVIDAGA…GEIETVLGYM (79 aa)).

It belongs to the glutamate 5-kinase family.

It localises to the cytoplasm. It catalyses the reaction L-glutamate + ATP = L-glutamyl 5-phosphate + ADP. The protein operates within amino-acid biosynthesis; L-proline biosynthesis; L-glutamate 5-semialdehyde from L-glutamate: step 1/2. In terms of biological role, catalyzes the transfer of a phosphate group to glutamate to form L-glutamate 5-phosphate. In Burkholderia vietnamiensis (strain G4 / LMG 22486) (Burkholderia cepacia (strain R1808)), this protein is Glutamate 5-kinase.